We begin with the raw amino-acid sequence, 349 residues long: 5-deoxyribose 1-phosphate isomerase (349 aa).

Substrate is bound by residues 49 to 51 (RGA), R92, and Q199. The active-site Proton donor is D240. 250 to 251 (NK) is a binding site for substrate.

The protein belongs to the EIF-2B alpha/beta/delta subunits family. DrdI subfamily.

The enzyme catalyses 5-deoxy-alpha-D-ribose 1-phosphate = 5-deoxy-D-ribulose 1-phosphate. Its pathway is carbohydrate degradation. Its function is as follows. Catalyzes the isomerization of 5-deoxy-alpha-D-ribose 1-phosphate to 5-deoxy-D-ribulose 1-phosphate, as part of a 5-deoxyribose salvage pathway that recycles this toxic radical SAM enzyme by-product to mainstream metabolites. This Clostridium botulinum (strain Okra / Type B1) protein is 5-deoxyribose 1-phosphate isomerase.